Here is a 234-residue protein sequence, read N- to C-terminus: Enterobactin synthase component D (234 aa).

D107, E109, and E152 together coordinate Mg(2+).

The protein belongs to the P-Pant transferase superfamily. EntD family. As to quaternary structure, entB, EntD, EntE, and EntF form a multienzyme complex called enterobactin synthase. It depends on Mg(2+) as a cofactor.

The protein resides in the membrane. It catalyses the reaction apo-[aryl-carrier protein] + CoA = holo-[aryl-carrier protein] + adenosine 3',5'-bisphosphate + H(+). The enzyme catalyses apo-[peptidyl-carrier protein] + CoA = holo-[peptidyl-carrier protein] + adenosine 3',5'-bisphosphate + H(+). The protein operates within siderophore biosynthesis; enterobactin biosynthesis. Involved in the biosynthesis of the siderophore enterobactin (enterochelin), which is a macrocyclic trimeric lactone of N-(2,3-dihydroxybenzoyl)-serine. The serine trilactone serves as a scaffolding for the three catechol functionalities that provide hexadentate coordination for the tightly ligated iron(2+) atoms. Plays an essential role in the assembly of the enterobactin by catalyzing the transfer of the 4'-phosphopantetheine (Ppant) moiety from coenzyme A to the apo-domains of both EntB (ArCP domain) and EntF (PCP domain) to yield their holo-forms which make them competent for the activation of 2,3-dihydroxybenzoate (DHB) and L-serine, respectively. The protein is Enterobactin synthase component D of Salmonella typhi.